Reading from the N-terminus, the 1701-residue chain is Rho guanine nucleotide exchange factor TIAM2 (1701 aa).

Disordered regions lie at residues Met1–Thr21, Ser201–Tyr250, Gly265–Ser293, and Ser389–Asn417. A lipid anchor (N-myristoyl glycine) is attached at Gly2. Residues Ser238–Ser248 show a composition bias toward low complexity. A compositionally biased stretch (basic and acidic residues) spans Leu397 to Ser413. The PH 1 domain maps to Val506–Ala620. Residues Gly628–Arg695 adopt a coiled-coil conformation. Residues Ile810–Ile881 form the RBD domain. The region spanning Asp890–Asp976 is the PDZ domain. Residues Asp1070–Arg1092 form a disordered region. The DH domain maps to Arg1099–Met1293. A PH 2 domain is found at Asp1347 to Pro1478. Disordered stretches follow at residues Asn1500–Asp1556 and Leu1568–Val1628. Positions Gly1513–Thr1527 are enriched in low complexity. At Ser1583 the chain carries Phosphoserine. Residues Arg1596 to Ala1607 show a composition bias toward basic and acidic residues. The residue at position 1648 (Thr1648) is a Phosphothreonine.

This sequence belongs to the TIAM family. As to quaternary structure, interacts with MAP1A, MAP1B, PARP1 and YWHAE. Interacts with CD44, PARD3 and MAPK8IP2. Phosphorylated on serine and threonine residues. Phosphorylated on Thr-1648 by Rho-kinase. Its phosphorylation by Rho-kinase inhibits its guanine nucleotide exchange activity, its interaction with MAP1A, MAP1B, PARP1 and YWHAE and reduces its ability to promote neurite growth. As to expression, expressed in the occipital, frontal and temporal lobes, cerebellum, putamen and testis.

It localises to the cytoplasm. The protein resides in the cell projection. Its subcellular location is the lamellipodium. It is found in the filopodium. The protein localises to the growth cone. It localises to the neuron projection. The protein resides in the perikaryon. Functionally, modulates the activity of RHO-like proteins and connects extracellular signals to cytoskeletal activities. Acts as a GDP-dissociation stimulator protein that stimulates the GDP-GTP exchange activity of RHO-like GTPases and activates them. Mediates extracellular laminin signals to activate Rac1, contributing to neurite growth. Involved in lamellipodial formation and advancement of the growth cone of embryonic hippocampal neurons. Promotes migration of neurons in the cerebral cortex. When overexpressed, induces membrane ruffling accompanied by the accumulation of actin filaments along the altered plasma membrane. Activates specifically RAC1, but not CDC42 and RHOA. In Homo sapiens (Human), this protein is Rho guanine nucleotide exchange factor TIAM2 (TIAM2).